The sequence spans 152 residues: Transcriptional regulator MraZ (152 aa).

SpoVT-AbrB domains follow at residues 5-52 (ASAI…PIHE) and 81-124 (AHEV…DEQS).

It belongs to the MraZ family. Forms oligomers.

It localises to the cytoplasm. The protein resides in the nucleoid. This chain is Transcriptional regulator MraZ, found in Shewanella baltica (strain OS195).